A 340-amino-acid polypeptide reads, in one-letter code: DNA-directed RNA polymerase subunit alpha (340 aa).

Positions 1–226 (MLIAQRPSLT…ELFGLARELN (226 aa)) are alpha N-terminal domain (alpha-NTD). Positions 243–340 (LAADLALPIE…DAGFVETEQY (98 aa)) are alpha C-terminal domain (alpha-CTD).

The protein belongs to the RNA polymerase alpha chain family. In terms of assembly, homodimer. The RNAP catalytic core consists of 2 alpha, 1 beta, 1 beta' and 1 omega subunit. When a sigma factor is associated with the core the holoenzyme is formed, which can initiate transcription.

It carries out the reaction RNA(n) + a ribonucleoside 5'-triphosphate = RNA(n+1) + diphosphate. Functionally, DNA-dependent RNA polymerase catalyzes the transcription of DNA into RNA using the four ribonucleoside triphosphates as substrates. The protein is DNA-directed RNA polymerase subunit alpha of Streptomyces avermitilis (strain ATCC 31267 / DSM 46492 / JCM 5070 / NBRC 14893 / NCIMB 12804 / NRRL 8165 / MA-4680).